Consider the following 163-residue polypeptide: MRALYPGSFDPLTNGHMDLIERAAVLFGDVIVAVLGNPSKKPAFSVEERIRQIRSSTAHLQGVEVVSFDGLTVNCAKEHSADLILRGLRAMSDFEYELQLAHTNRSLDDTLETVFMATSTQHSFLSSSVVKEVARFGGAIDHMVPKEVALDLNRLFNSAFLPH.

Substrate is bound at residue serine 8. Residues 8-9 (SF) and histidine 16 each bind ATP. Substrate contacts are provided by lysine 40, threonine 72, and arginine 86. ATP-binding positions include 87 to 89 (GLR), glutamate 97, and 122 to 128 (HSFLSSS).

This sequence belongs to the bacterial CoaD family. As to quaternary structure, homohexamer. Mg(2+) is required as a cofactor.

The protein resides in the cytoplasm. The enzyme catalyses (R)-4'-phosphopantetheine + ATP + H(+) = 3'-dephospho-CoA + diphosphate. Its pathway is cofactor biosynthesis; coenzyme A biosynthesis; CoA from (R)-pantothenate: step 4/5. Reversibly transfers an adenylyl group from ATP to 4'-phosphopantetheine, yielding dephospho-CoA (dPCoA) and pyrophosphate. This chain is Phosphopantetheine adenylyltransferase, found in Synechococcus sp. (strain CC9902).